The primary structure comprises 405 residues: Tryptophan synthase beta chain (405 aa).

An N6-(pyridoxal phosphate)lysine modification is found at lysine 98.

The protein belongs to the TrpB family. Tetramer of two alpha and two beta chains. Pyridoxal 5'-phosphate is required as a cofactor.

The enzyme catalyses (1S,2R)-1-C-(indol-3-yl)glycerol 3-phosphate + L-serine = D-glyceraldehyde 3-phosphate + L-tryptophan + H2O. It functions in the pathway amino-acid biosynthesis; L-tryptophan biosynthesis; L-tryptophan from chorismate: step 5/5. In terms of biological role, the beta subunit is responsible for the synthesis of L-tryptophan from indole and L-serine. This is Tryptophan synthase beta chain from Xylella fastidiosa (strain M23).